Reading from the N-terminus, the 317-residue chain is Integrin-binding sialoprotein (317 aa).

Positions 1–16 (MKTALILLSILGMACA) are cleaved as a signal peptide. 6 positions are modified to phosphoserine: Ser31, Ser67, Ser74, Ser75, Ser94, and Ser100. The interval 58–254 (FPVQGSSDSS…RTTSPPFGKT (197 aa)) is disordered. Residues 66–102 (SSEENGDDSSEEEEEEEETSNEGENNEESNEDEDSEA) show a composition bias toward acidic residues. An N-linked (GlcNAc...) asparagine glycan is attached at Asn104. O-linked (GalNAc...) threonine glycans are attached at residues Thr119 and Thr122. At Ser149 the chain carries Phosphoserine. Acidic residues predominate over residues 149–173 (SDEEEEEEEEGNENEESEAEVDENE). N-linked (GlcNAc...) asparagine glycans are attached at residues Asn177, Asn182, and Asn190. The segment covering 222–232 (KGTSKTTTSPN) has biased composition (polar residues). Thr227, Thr228, Thr229, Thr238, and Thr239 each carry an O-linked (GalNAc...) threonine glycan. Ser280 is subject to Phosphoserine. Positions 286–288 (RGD) match the Integrin-binding motif motif. Residues Tyr313 and Tyr314 each carry the sulfotyrosine modification.

Monomer. Interacts with integrins; the interaction promotes cell adhesion. In terms of processing, N-glycosylated; glycans consist of sialylated and core-fucosylated bi-, tri- and tetraantennary chains. Post-translationally, O-glycosylated at eight sites; mucin-type glycans contain Gal, GlcNAc, GalNAc and terminal NeuAc. Expressed in bone (at protein level). Expressed in trophoblast cells of placenta (at protein level). Expressed in brain.

It is found in the secreted. Binds tightly to hydroxyapatite. Appears to form an integral part of the mineralized matrix. Probably important to cell-matrix interaction. Promotes adhesion and migration of various cells via the alpha-V/beta-3 integrin receptor (ITGAV:ITGB3). The sequence is that of Integrin-binding sialoprotein (IBSP) from Homo sapiens (Human).